The sequence spans 105 residues: Large ribosomal subunit protein bL21c (105 aa).

It belongs to the bacterial ribosomal protein bL21 family. Part of the 50S ribosomal subunit.

Its subcellular location is the plastid. It localises to the chloroplast. Its function is as follows. This protein binds to 23S rRNA. The sequence is that of Large ribosomal subunit protein bL21c from Phaeodactylum tricornutum (strain CCAP 1055/1).